Here is a 355-residue protein sequence, read N- to C-terminus: Protein MxiC (355 aa).

The protein resides in the secreted. It is found in the host cell. Necessary for the secretion of IPA invasins. The sequence is that of Protein MxiC (mxiC) from Shigella flexneri.